Here is a 417-residue protein sequence, read N- to C-terminus: Aromatic-amino-acid aminotransferase 1 (417 aa).

The residue at position 258 (Lys258) is an N6-(pyridoxal phosphate)lysine.

The protein belongs to the class-I pyridoxal-phosphate-dependent aminotransferase family. Homodimer. Requires pyridoxal 5'-phosphate as cofactor.

The enzyme catalyses an aromatic L-alpha-amino acid + 2-oxoglutarate = an aromatic oxo-acid + L-glutamate. In terms of biological role, catalyzes the transamination of phenylalanine, tyrosine and tryptophan. Shows virtually no activity towards aspartic acid, alanine, valine or isoleucine. This Thermococcus litoralis (strain ATCC 51850 / DSM 5473 / JCM 8560 / NS-C) protein is Aromatic-amino-acid aminotransferase 1.